The sequence spans 117 residues: Cliotide T9 (117 aa).

An N-terminal signal peptide occupies residues Met-1–Ala-25. The cyclopeptide (Gly-Asn) cross-link spans Gly-26–Asn-55. Disulfide bonds link Cys-29/Cys-45, Cys-33/Cys-47, and Cys-38/Cys-52. A propeptide spans His-56–Pro-117 (removed in mature form).

Post-translationally, contains 3 disulfide bonds. In terms of processing, this is a cyclic peptide. In terms of tissue distribution, expressed in seed but not in root, nodule, flower, stem, shoot, leaf and pod (at protein level).

Probably participates in a plant defense mechanism. The sequence is that of Cliotide T9 from Clitoria ternatea (Butterfly pea).